Reading from the N-terminus, the 310-residue chain is Olfactory receptor 5AR1 (310 aa).

Residues 1–25 (MDKENHSVVTEFVFMGITQDPQLQI) are Extracellular-facing. Asn5 is a glycosylation site (N-linked (GlcNAc...) asparagine). A helical transmembrane segment spans residues 26-46 (IFFVVFLLVYLVNVIGNVGMI). Topologically, residues 47–54 (ILIITDSQ) are cytoplasmic. The chain crosses the membrane as a helical span at residues 55 to 75 (LHTPMYFFLCNLSFVDLGYSS). The Extracellular segment spans residues 76-99 (AIAPRMLADFLTKHKVISFSSCAT). The cysteines at positions 97 and 189 are disulfide-linked. A helical transmembrane segment spans residues 100–120 (QFAFFVGFVDAECYVLAAMAY). The Cytoplasmic segment spans residues 121-133 (DRFVAICRPLHYS). Residues 134-154 (TLMSKKVCLVLMLGSYFAGLV) traverse the membrane as a helical segment. Residues 155–196 (SLVAHTSLTFSLSYCGSNIINHFFCEIPPLLALSCSDTYISE) lie on the Extracellular side of the membrane. A helical membrane pass occupies residues 197 to 217 (ILLFSLCGFIEFSTILIIFIS). Position 203 (Cys203) interacts with Cu cation. At 218-237 (YAFILIAIIRIRSAEGRLKA) the chain is on the cytoplasmic side. A helical membrane pass occupies residues 238-258 (FSTCGSHLTGVTLFYGTVMFM). Cu cation-binding residues include Met256 and Arg261. Topologically, residues 259 to 271 (YLRPTSSYSLDQD) are extracellular. The helical transmembrane segment at 272–292 (KWASVFYTIIIPMLNPLIYSL) threads the bilayer. The Cytoplasmic portion of the chain corresponds to 293 to 310 (RNKDVKAAFKKLIGKKPQ).

The protein belongs to the G-protein coupled receptor 1 family.

The protein resides in the cell membrane. With respect to regulation, copper binding enhances receptor activity in response to odorant binding. Olfactory receptor that is activated by the binding of organosulfur odorants with thioether groups such as (methylthio)methanethiol (MTMT). The activity of this receptor is mediated by G proteins which activate adenylyl cyclase. The chain is Olfactory receptor 5AR1 from Mus musculus (Mouse).